A 362-amino-acid chain; its full sequence is Very-long-chain (3R)-3-hydroxyacyl-CoA dehydratase 3 (362 aa).

Position 1 is an N-acetylmethionine (Met-1). At Met-1 to Tyr-149 the chain is on the cytoplasmic side. The region spanning Val-5–Thr-94 is the CS domain. Thr-7 is subject to Phosphothreonine. Positions Leu-111–Glu-136 form a coiled coil. Ser-114 and Ser-135 each carry phosphoserine. Residues Leu-150–Val-170 traverse the membrane as a helical segment. Topologically, residues Arg-171 to His-185 are lumenal. The chain crosses the membrane as a helical span at residues Thr-186–Ile-207. The Cytoplasmic segment spans residues Gly-208–Ser-217. A helical membrane pass occupies residues Leu-218–Met-235. The Lumenal portion of the chain corresponds to Glu-236–Lys-241. A helical transmembrane segment spans residues Ala-242–Ile-256. Residues Phe-257–Tyr-279 are Cytoplasmic-facing. Residues Thr-280 to Ile-298 traverse the membrane as a helical segment. Active-site residues include Tyr-286 and Glu-293. Topologically, residues Gln-299–Val-322 are lumenal. A helical membrane pass occupies residues Arg-323 to Phe-343. The Cytoplasmic portion of the chain corresponds to Arg-344–His-362.

The protein belongs to the very long-chain fatty acids dehydratase HACD family. May interact with enzymes of the ELO family (including ELOVL1); with those enzymes that mediate condensation, the first of the four steps of the reaction cycle responsible for fatty acids elongation, may be part of a larger fatty acids elongase complex. Interacts with RAC1. Associates with internalized insulin receptor/INSR complexes on Golgi/endosomal membranes; HACD3/PTPLAD1 together with ATIC and PRKAA2/AMPK2 is proposed to be part of a signaling network regulating INSR autophosphorylation and endocytosis. Highly expressed in testis, kidney, brain, liver and weakly in skeletal muscle, spleen and heart. No expression detected in leukocytes.

It localises to the endoplasmic reticulum membrane. It carries out the reaction a very-long-chain (3R)-3-hydroxyacyl-CoA = a very-long-chain (2E)-enoyl-CoA + H2O. The catalysed reaction is (3R)-hydroxyhexadecanoyl-CoA = (2E)-hexadecenoyl-CoA + H2O. The protein operates within lipid metabolism; fatty acid biosynthesis. Its function is as follows. Catalyzes the third of the four reactions of the long-chain fatty acids elongation cycle. This endoplasmic reticulum-bound enzymatic process, allows the addition of two carbons to the chain of long- and very long-chain fatty acids/VLCFAs per cycle. This enzyme catalyzes the dehydration of the 3-hydroxyacyl-CoA intermediate into trans-2,3-enoyl-CoA, within each cycle of fatty acid elongation. Thereby, it participates in the production of VLCFAs of different chain lengths that are involved in multiple biological processes as precursors of membrane lipids and lipid mediators. May be involved in Rac1-signaling pathways leading to the modulation of gene expression. Promotes insulin receptor/INSR autophosphorylation and is involved in INSR internalization. This chain is Very-long-chain (3R)-3-hydroxyacyl-CoA dehydratase 3, found in Homo sapiens (Human).